Reading from the N-terminus, the 449-residue chain is uncharacterized protein (449 aa).

Phosphoserine is present on serine 420.

This sequence belongs to the NAD kinase family.

It is found in the cytoplasm. The protein resides in the nucleus. This is an uncharacterized protein from Schizosaccharomyces pombe (strain 972 / ATCC 24843) (Fission yeast).